The chain runs to 1162 residues: Protein OBERON 4 (1162 aa).

4 stretches are compositionally biased toward basic and acidic residues: residues Met-1 to Asp-19, Asn-61 to Glu-77, Phe-90 to Arg-99, and Val-118 to Leu-134. Disordered stretches follow at residues Met-1–Ser-235, Ile-251–Asn-307, Asp-321–Glu-346, and Ser-441–Val-485. Residues Lys-135 to Glu-146 show a composition bias toward polar residues. A compositionally biased stretch (basic and acidic residues) spans Ser-148–Asn-157. Over residues Lys-163–Val-182 the composition is skewed to polar residues. Residues Glu-203 to Pro-213 show a composition bias toward acidic residues. 4 stretches are compositionally biased toward basic and acidic residues: residues Thr-225–Ser-235, Ser-263–Glu-300, Asp-336–Glu-346, and Ser-441–Asn-457. The PHD-type zinc finger occupies Ala-835–Pro-899. The stretch at Met-1065 to Ala-1161 forms a coiled coil.

Self-interacts. Interacts with OBE1 and OBE2. Interacts with OBE3.

Its subcellular location is the nucleus. In terms of biological role, probable transcription factor that functions redundantly with OBE3 in specification of the hypophysis and establishment of the embryonic root. Involved in the activation of ARF5/MP-dependent gene expression during embryonic root meristem initiation. Involved in shoot meristem homeostasis. The sequence is that of Protein OBERON 4 from Arabidopsis thaliana (Mouse-ear cress).